The sequence spans 362 residues: Bifunctional nitrilase/nitrile hydratase NIT4 (362 aa).

The CN hydrolase domain maps to 31-307 (VRATVVQAST…EALITADLDL (277 aa)). The Proton acceptor role is filled by Glu-71. The active-site Proton donor is the Lys-162. Cys-196 functions as the Nucleophile in the catalytic mechanism.

It belongs to the carbon-nitrogen hydrolase superfamily. Nitrilase family.

The enzyme catalyses a nitrile + 2 H2O = a carboxylate + NH4(+). The catalysed reaction is 3-cyano-L-alanine + 2 H2O = L-aspartate + NH4(+). Its function is as follows. Highly specific for beta-cyano-L-alanine (Ala(CN)). Low activity with 3-phenylpropionitrile (PPN). Not associated with auxin production but may be involved in cyanide detoxification. This Oryza sativa subsp. japonica (Rice) protein is Bifunctional nitrilase/nitrile hydratase NIT4 (NIT4).